The chain runs to 376 residues: Arsenite methyltransferase (376 aa).

Ser47 and Ser336 each carry phosphoserine. Basic and acidic residues predominate over residues 354 to 363 (SDKMKPRHAP). Positions 354–376 (SDKMKPRHAPEGTGGCCGKRKNC) are disordered.

Belongs to the methyltransferase superfamily. Arsenite methyltransferase family.

It localises to the cytoplasm. The protein localises to the cytosol. It catalyses the reaction arsenic triglutathione + [thioredoxin]-dithiol + S-adenosyl-L-methionine + 2 H2O = methylarsonous acid + [thioredoxin]-disulfide + 3 glutathione + S-adenosyl-L-homocysteine + H(+). It carries out the reaction arsenic triglutathione + 2 [thioredoxin]-dithiol + 2 S-adenosyl-L-methionine + H2O = dimethylarsinous acid + 2 [thioredoxin]-disulfide + 3 glutathione + 2 S-adenosyl-L-homocysteine + 2 H(+). The enzyme catalyses arsenic triglutathione + 3 [thioredoxin]-dithiol + 3 S-adenosyl-L-methionine = trimethylarsine + 3 [thioredoxin]-disulfide + 3 glutathione + 3 S-adenosyl-L-homocysteine + 3 H(+). Its function is as follows. Catalyzes the transfer of a methyl group from AdoMet to trivalent arsenicals producing methylated and dimethylated arsenicals. It methylates arsenite to form methylarsonate, Me-AsO(3)H(2), which is reduced by methylarsonate reductase to methylarsonite, Me-As(OH)2. Methylarsonite is also a substrate and it is converted into the much less toxic compound dimethylarsinate (cacodylate), Me(2)As(O)-OH. This Mus musculus (Mouse) protein is Arsenite methyltransferase (As3mt).